The primary structure comprises 312 residues: Beta-ketoacyl-[acyl-carrier-protein] synthase III 1 (312 aa).

Catalysis depends on residues Cys113 and His237. The ACP-binding stretch occupies residues 238-242; that stretch reads QANIR. Residue Asn267 is part of the active site.

Belongs to the thiolase-like superfamily. FabH family. In terms of assembly, homodimer.

Its subcellular location is the cytoplasm. The enzyme catalyses malonyl-[ACP] + acetyl-CoA + H(+) = 3-oxobutanoyl-[ACP] + CO2 + CoA. The protein operates within lipid metabolism; fatty acid biosynthesis. Catalyzes the condensation reaction of fatty acid synthesis by the addition to an acyl acceptor of two carbons from malonyl-ACP. Catalyzes the first condensation reaction which initiates fatty acid synthesis and may therefore play a role in governing the total rate of fatty acid production. Possesses both acetoacetyl-ACP synthase and acetyl transacylase activities. Its substrate specificity determines the biosynthesis of branched-chain and/or straight-chain of fatty acids. The chain is Beta-ketoacyl-[acyl-carrier-protein] synthase III 1 from Halalkalibacterium halodurans (strain ATCC BAA-125 / DSM 18197 / FERM 7344 / JCM 9153 / C-125) (Bacillus halodurans).